We begin with the raw amino-acid sequence, 187 residues long: UPF0301 protein YPTS_3341 (187 aa).

The protein belongs to the UPF0301 (AlgH) family.

The sequence is that of UPF0301 protein YPTS_3341 from Yersinia pseudotuberculosis serotype IB (strain PB1/+).